The chain runs to 122 residues: uncharacterized protein (122 aa).

The stretch at 46–116 (KDLQKEVDDL…HQLENKRELN (71 aa)) forms a coiled coil.

This is an uncharacterized protein from Invertebrate iridescent virus 6 (IIV-6).